Reading from the N-terminus, the 98-residue chain is Integration host factor subunit alpha (98 aa).

Residues 53–69 (DLREKNERPGRNPKTGE) are compositionally biased toward basic and acidic residues. Residues 53–72 (DLREKNERPGRNPKTGEDIP) form a disordered region.

The protein belongs to the bacterial histone-like protein family. In terms of assembly, heterodimer of an alpha and a beta chain.

Functionally, this protein is one of the two subunits of integration host factor, a specific DNA-binding protein that functions in genetic recombination as well as in transcriptional and translational control. This chain is Integration host factor subunit alpha, found in Vibrio atlanticus (strain LGP32) (Vibrio splendidus (strain Mel32)).